The following is a 94-amino-acid chain: DNA gyrase subunit A (94 aa).

The region spanning 35-94 is the Topo IIA-type catalytic domain; sequence LPDVRDGLKPVHRRILYGLNEQGMTPDKPYKKSARIVGDVMGKYHPHGDSSIYEAMVRMA.

The protein belongs to the type II topoisomerase GyrA/ParC subunit family. As to quaternary structure, heterotetramer, composed of two GyrA and two GyrB chains. In the heterotetramer, GyrA contains the active site tyrosine that forms a transient covalent intermediate with DNA, while GyrB binds cofactors and catalyzes ATP hydrolysis.

The protein localises to the cytoplasm. The catalysed reaction is ATP-dependent breakage, passage and rejoining of double-stranded DNA.. Functionally, a type II topoisomerase that negatively supercoils closed circular double-stranded (ds) DNA in an ATP-dependent manner to modulate DNA topology and maintain chromosomes in an underwound state. Negative supercoiling favors strand separation, and DNA replication, transcription, recombination and repair, all of which involve strand separation. Also able to catalyze the interconversion of other topological isomers of dsDNA rings, including catenanes and knotted rings. Type II topoisomerases break and join 2 DNA strands simultaneously in an ATP-dependent manner. The polypeptide is DNA gyrase subunit A (Staphylococcus epidermidis).